The following is a 140-amino-acid chain: Large ribosomal subunit protein bL17 (140 aa).

The protein belongs to the bacterial ribosomal protein bL17 family. In terms of assembly, part of the 50S ribosomal subunit. Contacts protein L32.

The sequence is that of Large ribosomal subunit protein bL17 from Rhizobium johnstonii (strain DSM 114642 / LMG 32736 / 3841) (Rhizobium leguminosarum bv. viciae).